We begin with the raw amino-acid sequence, 501 residues long: Pyruvate kinase (501 aa).

Arg-50 contacts substrate. Asn-52, Ser-54, Asp-85, and Thr-86 together coordinate K(+). ATP is bound at residue 52-55 (NFSH). Residues Arg-92 and Lys-178 each contribute to the ATP site. Glu-243 contributes to the Mg(2+) binding site. 3 residues coordinate substrate: Gly-266, Asp-267, and Thr-299. Asp-267 is a Mg(2+) binding site.

Belongs to the pyruvate kinase family. Homotetramer. It depends on Mg(2+) as a cofactor. The cofactor is K(+).

It catalyses the reaction pyruvate + ATP = phosphoenolpyruvate + ADP + H(+). It functions in the pathway carbohydrate degradation; glycolysis; pyruvate from D-glyceraldehyde 3-phosphate: step 5/5. This Lachancea kluyveri (strain ATCC 58438 / CBS 3082 / BCRC 21498 / NBRC 1685 / JCM 7257 / NCYC 543 / NRRL Y-12651) (Yeast) protein is Pyruvate kinase (PYK1).